The chain runs to 369 residues: MSPPPQRIGLPWPELNDGLAYKDAISSSESELTTVSEFYFTKYKSSAPLLGWIQRIQNGQIQIDGEVVKDPNTLLRSGSKLVYSRLPWKEPDTPYSLEVLYEDDDLIALNKPSGLQVLPGGLFQQRTVLTQLQWCFGKNDSYIGSRESPHPVPVHRLGRGTSGILLCAKTKLAKTKLAAYFAEGTSLVGSGNLDQECGTGRKLSKIYRALADGIVEEDEVVIKQPIGVVRYPGVAQGLYVASPEGKPAFSKVFVLERDREKNCSLVKVEIQSGRPHQIRIHLAYMGHPLVGDPLYVAGGQPKCFDPDLVDDAAAFAEDGGYRRPNQAVPGDCGYHLHAHQVELPNLLNTHKVVKIVAPLPPILQTRCET.

Residues 47–104 (APLLGWIQRIQNGQIQIDGEVVKDPNTLLRSGSKLVYSRLPWKEPDTPYSLEVLYEDD) enclose the S4 RNA-binding domain.

This sequence belongs to the pseudouridine synthase RluA family.

The enzyme catalyses a uridine in RNA = a pseudouridine in RNA. This Arabidopsis thaliana (Mouse-ear cress) protein is RNA pseudouridine synthase 5.